The sequence spans 474 residues: Mercuric reductase (474 aa).

Positions 19, 39, and 44 each coordinate FAD. An intrachain disulfide couples Cys45 to Cys50. The FAD site is built by Lys54, Ala119, Asp315, and Val323. Residues Cys471 and Cys472 each coordinate Hg(2+).

It belongs to the class-I pyridine nucleotide-disulfide oxidoreductase family. Homodimer. It depends on FAD as a cofactor.

The catalysed reaction is Hg + NADP(+) + H(+) = Hg(2+) + NADPH. Functionally, resistance to Hg(2+) in bacteria appears to be governed by a specialized system which includes mercuric reductase. MerA protein is responsible for volatilizing mercury as Hg(0). The sequence is that of Mercuric reductase (merA) from Streptomyces lividans.